A 558-amino-acid polypeptide reads, in one-letter code: Thermosome subunit alpha (558 aa).

A disordered region spans residues 536–558; sequence TEKGKKEGGEGAGAETPGAPSLE. A compositionally biased stretch (low complexity) spans 548-558; it reads GAETPGAPSLE.

This sequence belongs to the TCP-1 chaperonin family. In terms of assembly, forms a Heterooligomeric complex of two stacked eight-membered rings.

Molecular chaperone; binds unfolded polypeptides in vitro, and has a weak ATPase activity. In Sulfolobus acidocaldarius (strain ATCC 33909 / DSM 639 / JCM 8929 / NBRC 15157 / NCIMB 11770), this protein is Thermosome subunit alpha (thsA).